The following is a 434-amino-acid chain: Adenylosuccinate synthetase (434 aa).

GTP contacts are provided by residues 12–18 (GDEGKGK) and 40–42 (GHT). The Proton acceptor role is filled by aspartate 13. Positions 13 and 40 each coordinate Mg(2+). Residues 13–16 (DEGK), 38–41 (NAGH), threonine 129, arginine 143, glutamine 224, threonine 239, and arginine 303 each bind IMP. The Proton donor role is filled by histidine 41. Position 299–305 (299–305 (AVTGRPR)) interacts with substrate. GTP-binding positions include arginine 305, 331–333 (KLD), and 413–415 (STG).

This sequence belongs to the adenylosuccinate synthetase family. As to quaternary structure, homodimer. Mg(2+) serves as cofactor.

It is found in the cytoplasm. It carries out the reaction IMP + L-aspartate + GTP = N(6)-(1,2-dicarboxyethyl)-AMP + GDP + phosphate + 2 H(+). It participates in purine metabolism; AMP biosynthesis via de novo pathway; AMP from IMP: step 1/2. Its function is as follows. Plays an important role in the de novo pathway of purine nucleotide biosynthesis. Catalyzes the first committed step in the biosynthesis of AMP from IMP. This chain is Adenylosuccinate synthetase, found in Solibacter usitatus (strain Ellin6076).